Consider the following 495-residue polypeptide: Flagellin (495 aa).

This sequence belongs to the bacterial flagellin family.

It is found in the secreted. It localises to the bacterial flagellum. In terms of biological role, flagellin is the subunit protein which polymerizes to form the filaments of bacterial flagella. In Salmonella typhimurium (strain LT2 / SGSC1412 / ATCC 700720), this protein is Flagellin (fliC).